The primary structure comprises 466 residues: Neuropeptide Y receptor type 5 (466 aa).

Topologically, residues 1 to 63 (MEVKLEEHFN…YRGSVDDLQY (63 aa)) are extracellular. Residues N10, N17, N38, and N39 are each glycosylated (N-linked (GlcNAc...) asparagine). A helical membrane pass occupies residues 64–84 (FLIGLYTFVSLLGFMGNLLIL). The Cytoplasmic portion of the chain corresponds to 85 to 98 (MAVMKKRNQKTTVN). The chain crosses the membrane as a helical span at residues 99 to 119 (FLIGNLAFSDILVVLFCSPFT). The Extracellular portion of the chain corresponds to 120-138 (LTSVLLDQWMFGKAMCHIM). A disulfide bond links C135 and C219. The helical transmembrane segment at 139–159 (PFLQCVSVLVSTLILISIAIV) threads the bilayer. At 160–177 (RYHMIKHPISNNLTANHG) the chain is on the cytoplasmic side. Residues 178 to 198 (YFLIATVWTLGFAICSPLPVF) form a helical membrane-spanning segment. At 199-229 (HSLVELKETFGSALLSSKYLCVESWPSDSYR) the chain is on the extracellular side. Residues 230 to 250 (IAFTISLLLVQYILPLVCLTV) form a helical membrane-spanning segment. At 251–389 (SHTSVCRSIS…KKRSRSVFYR (139 aa)) the chain is on the cytoplasmic side. A disordered region spans residues 323–346 (GPSQEKHLTVPENPGSVRSQLSPS). The chain crosses the membrane as a helical span at residues 390–410 (LTILILVFAVSWMPLHVFHVV). Over 411–427 (TDFNDNLISNRHFKLVY) the chain is Extracellular. The chain crosses the membrane as a helical span at residues 428–448 (CICHLLGMMSCCLNPILYGFL). The Cytoplasmic segment spans residues 449–466 (NNGIKADLRALIHCLHMS). Residue C462 is the site of S-palmitoyl cysteine attachment.

It belongs to the G-protein coupled receptor 1 family.

The protein resides in the cell membrane. Receptor for neuropeptide Y and peptide YY. The activity of this receptor is mediated by G proteins that inhibit adenylate cyclase activity. Seems to be associated with food intake. Could be involved in feeding disorders. The sequence is that of Neuropeptide Y receptor type 5 (Npy5r) from Mus musculus (Mouse).